A 112-amino-acid chain; its full sequence is Ribonuclease P protein component (112 aa).

Belongs to the RnpA family. As to quaternary structure, consists of a catalytic RNA component (M1 or rnpB) and a protein subunit.

It carries out the reaction Endonucleolytic cleavage of RNA, removing 5'-extranucleotides from tRNA precursor.. In terms of biological role, RNaseP catalyzes the removal of the 5'-leader sequence from pre-tRNA to produce the mature 5'-terminus. It can also cleave other RNA substrates such as 4.5S RNA. The protein component plays an auxiliary but essential role in vivo by binding to the 5'-leader sequence and broadening the substrate specificity of the ribozyme. The sequence is that of Ribonuclease P protein component from Pelotomaculum thermopropionicum (strain DSM 13744 / JCM 10971 / SI).